A 525-amino-acid polypeptide reads, in one-letter code: GMP synthase [glutamine-hydrolyzing] (525 aa).

The 200-residue stretch at 8 to 207 folds into the Glutamine amidotransferase type-1 domain; that stretch reads KILILDFGSQ…ALDICGCDAN (200 aa). The active-site Nucleophile is Cys-85. Catalysis depends on residues His-181 and Glu-183. A GMPS ATP-PPase domain is found at 208-400; the sequence is WKPSSIIEDA…LGLPYDMLYR (193 aa). Residue 235-241 participates in ATP binding; sequence SGGVDSS.

Homodimer.

The catalysed reaction is XMP + L-glutamine + ATP + H2O = GMP + L-glutamate + AMP + diphosphate + 2 H(+). Its pathway is purine metabolism; GMP biosynthesis; GMP from XMP (L-Gln route): step 1/1. Its function is as follows. Catalyzes the synthesis of GMP from XMP. This chain is GMP synthase [glutamine-hydrolyzing], found in Shewanella piezotolerans (strain WP3 / JCM 13877).